We begin with the raw amino-acid sequence, 200 residues long: Pyridoxal 5'-phosphate synthase subunit PdxT (200 aa).

52–54 serves as a coordination point for L-glutamine; sequence GES. Catalysis depends on C84, which acts as the Nucleophile. Residues R116 and 145–146 contribute to the L-glutamine site; that span reads IR. Active-site charge relay system residues include H181 and E183.

This sequence belongs to the glutaminase PdxT/SNO family. In terms of assembly, in the presence of PdxS, forms a dodecamer of heterodimers. Only shows activity in the heterodimer.

The enzyme catalyses aldehydo-D-ribose 5-phosphate + D-glyceraldehyde 3-phosphate + L-glutamine = pyridoxal 5'-phosphate + L-glutamate + phosphate + 3 H2O + H(+). The catalysed reaction is L-glutamine + H2O = L-glutamate + NH4(+). It participates in cofactor biosynthesis; pyridoxal 5'-phosphate biosynthesis. Functionally, catalyzes the hydrolysis of glutamine to glutamate and ammonia as part of the biosynthesis of pyridoxal 5'-phosphate. The resulting ammonia molecule is channeled to the active site of PdxS. This Sulfurisphaera tokodaii (strain DSM 16993 / JCM 10545 / NBRC 100140 / 7) (Sulfolobus tokodaii) protein is Pyridoxal 5'-phosphate synthase subunit PdxT.